A 266-amino-acid chain; its full sequence is 4-hydroxy-tetrahydrodipicolinate reductase (266 aa).

NAD(+) is bound by residues 8-13 (GAAGRM) and glutamate 33. Arginine 34 is a binding site for NADP(+). NAD(+) is bound by residues 97-99 (GST) and 121-124 (APNM). Catalysis depends on histidine 154, which acts as the Proton donor/acceptor. (S)-2,3,4,5-tetrahydrodipicolinate is bound at residue histidine 155. The active-site Proton donor is lysine 158. A (S)-2,3,4,5-tetrahydrodipicolinate-binding site is contributed by 164 to 165 (GT).

Belongs to the DapB family.

Its subcellular location is the cytoplasm. The catalysed reaction is (S)-2,3,4,5-tetrahydrodipicolinate + NAD(+) + H2O = (2S,4S)-4-hydroxy-2,3,4,5-tetrahydrodipicolinate + NADH + H(+). The enzyme catalyses (S)-2,3,4,5-tetrahydrodipicolinate + NADP(+) + H2O = (2S,4S)-4-hydroxy-2,3,4,5-tetrahydrodipicolinate + NADPH + H(+). It participates in amino-acid biosynthesis; L-lysine biosynthesis via DAP pathway; (S)-tetrahydrodipicolinate from L-aspartate: step 4/4. Its function is as follows. Catalyzes the conversion of 4-hydroxy-tetrahydrodipicolinate (HTPA) to tetrahydrodipicolinate. In Geobacter metallireducens (strain ATCC 53774 / DSM 7210 / GS-15), this protein is 4-hydroxy-tetrahydrodipicolinate reductase.